The following is a 908-amino-acid chain: MATIHVDGKEYEVNGADNLLEACLSLGLDIPYFCWHPALGSVGACRQCAVKQYQNAEDTRGRLVMSCMTPASDGTFISIDDEEAKQFRESVVEWLMTNHPHDCPVCEEGGNCHLQDMTVMTGHSFRRYRFTKRTHRNQDLGPFISHEMNRCIACYRCVRYYKDYADGTDLGVYGAHDNVYFGRPEDGTLESEFSGNLVEICPTGVFTDKTHSERYNRKWDMQFAPSICQQCSIGCNISPGERYGELRRIENRYNGTVNHYFLCDRGRFGYGYVNLKDRPRQPVQRRGDDFITLNAEQAMQGAADILRQSKKVIGIGSPRASVESNFALRELVGEENFYTGIAHGEQERLQLALKVLREGGIYTPALREIESYDAVLVLGEDVTQTGARVALAVRQAVKGKAREMAAAQKVADWQIAAILNIGQRAKHPLFVTNVDDTRLDDIAAWTYRAPVEDQARLGFAIAHALDNSAPAVDGIEPELQSKIDVIVQALAGAKKPLIISGTNTGSAEVIQAAANVAKALKGRGADVGITMIARSVNSMGLGIMGGGSLEEALTELETGRADAVVVLENDLHRHASATRVNAALAKAPLVMVVDHQRTAIMENAHLVLSAASFAESDGTVINNEGRAQRFFQVYDPAYYDSQTVMLESWRWLHSLHSTLLSREVDWTQLDHVIDAVVAKIPELAGIKDAAPDATFRIRGQKLAREPHRYSGRTAMRANISVHEPRQPQDIDTMFTFSMEGNNQPTAHRSQVPFAWAPGWNSPQAWNKFQDEVGGKLRFGDPGVRLFETSENSLDYFTSVPARFQPQDGKWRIAPYYHLFGSDELSQRAPVFQSRMPQPYIKLNPADAAKLGVNAGTRVSFSYDGNMVTLPVEISEGLTAGQVGLPMGMSGIAPVLAGAHLEDLKEAQQ.

The 2Fe-2S ferredoxin-type domain occupies 2-83 (ATIHVDGKEY…GTFISIDDEE (82 aa)). [2Fe-2S] cluster-binding residues include Cys34, Cys45, Cys48, and Cys67. The 4Fe-4S His(Cys)3-ligated-type domain occupies 83 to 122 (EAKQFRESVVEWLMTNHPHDCPVCEEGGNCHLQDMTVMTG). 12 residues coordinate [4Fe-4S] cluster: His99, Cys103, Cys106, Cys112, Cys151, Cys154, Cys157, Cys201, Cys228, Cys231, Cys235, and Cys263. The 4Fe-4S Mo/W bis-MGD-type domain maps to 221–277 (MQFAPSICQQCSIGCNISPGERYGELRRIENRYNGTVNHYFLCDRGRFGYGYVNLKD).

The protein belongs to the complex I 75 kDa subunit family. Composed of 13 different subunits. Subunits NuoCD, E, F, and G constitute the peripheral sector of the complex. The cofactor is [2Fe-2S] cluster. [4Fe-4S] cluster is required as a cofactor.

The catalysed reaction is a quinone + NADH + 5 H(+)(in) = a quinol + NAD(+) + 4 H(+)(out). Its function is as follows. NDH-1 shuttles electrons from NADH, via FMN and iron-sulfur (Fe-S) centers, to quinones in the respiratory chain. The immediate electron acceptor for the enzyme in this species is believed to be ubiquinone. Couples the redox reaction to proton translocation (for every two electrons transferred, four hydrogen ions are translocated across the cytoplasmic membrane), and thus conserves the redox energy in a proton gradient. This chain is NADH-quinone oxidoreductase subunit G (nuoG), found in Escherichia coli O6:H1 (strain CFT073 / ATCC 700928 / UPEC).